The primary structure comprises 260 residues: Glutamate racemase (260 aa).

Substrate is bound by residues 14–15 (DS) and 46–47 (YG). C77 acts as the Proton donor/acceptor in catalysis. Residue 78–79 (NT) participates in substrate binding. Catalysis depends on C188, which acts as the Proton donor/acceptor. 189-190 (TH) contacts substrate.

This sequence belongs to the aspartate/glutamate racemases family.

It catalyses the reaction L-glutamate = D-glutamate. The protein operates within cell wall biogenesis; peptidoglycan biosynthesis. Its function is as follows. Provides the (R)-glutamate required for cell wall biosynthesis. This is Glutamate racemase from Clostridium perfringens (strain ATCC 13124 / DSM 756 / JCM 1290 / NCIMB 6125 / NCTC 8237 / Type A).